A 732-amino-acid chain; its full sequence is MGRREEMIAKIKELMTQPERIRNMGIAAHIDHGKTTLSDNLLAGAGMISEELAGKQLVLDFDEQEQARGITINAANVSMVHNYEGNDYLINLIDTPGHVDFGGDVTRAMRAIDGAIIVVDAVEGVMPQTETVLRQALREYVKPVLFINKVDRLIKELKLTPQQMQERFVKVITDVNRLIRRYAPPEFKDKWLVKVEDGSVAFGSAYYNWALSVPYMKKTGVSFKDIIDLTNAGDLKTLRKKAPLHVVVLDMVVKHLPNPLEAQKYRIPHLWRGDINSDVGQAMMNCDPKGPMTMVVTKIILDKHAGEVATGRVWSGTVKTGQEVYLINSKRKARIQQVGIYMGPERINMEAVPAGNIVAVTGLRDAMAGETVSVQQIEPFEALHYTSEPVVTVAIEAKNVKDLPKLVEALRQLAKEDPTLHVKIDEETGQHLLSGMGELHLEVKLHRLKTEWKLDVEVSPPIVVYRESVTKQSPIVEGKSPNKHNRFYITVEPMPDEIYQAIREGEIPEGRPKDPKAVAKKLAELGMDYEIAKGIVDIYNGNMFLDNTKGIQYLNEVMDLLVDGFHQAMDEGPLAKEPVMKVIVRLHDAKIHEDNVHRGPAQIYPAIRSAIHCAMMKAGPVLYEPYQKVIINVPYEYMGAVSRELNQRRGQLIDMRQEGEVMIIIGEAPVAEMFGFAGAIRGATSGKALWTTEHAGFKRVPNELAQQIIRQIRQRKGLDPNPPKEQDVCPQQ.

The tr-type G domain maps to 19 to 260; that stretch reads ERIRNMGIAA…MVVKHLPNPL (242 aa). Residues 28–35, 94–98, and 148–151 each bind GTP; these read AHIDHGKT, DTPGH, and NKVD. His-597 bears the Diphthamide mark.

Belongs to the TRAFAC class translation factor GTPase superfamily. Classic translation factor GTPase family. EF-G/EF-2 subfamily.

It localises to the cytoplasm. Catalyzes the GTP-dependent ribosomal translocation step during translation elongation. During this step, the ribosome changes from the pre-translocational (PRE) to the post-translocational (POST) state as the newly formed A-site-bound peptidyl-tRNA and P-site-bound deacylated tRNA move to the P and E sites, respectively. Catalyzes the coordinated movement of the two tRNA molecules, the mRNA and conformational changes in the ribosome. This is Elongation factor 2 from Thermococcus kodakarensis (strain ATCC BAA-918 / JCM 12380 / KOD1) (Pyrococcus kodakaraensis (strain KOD1)).